Consider the following 283-residue polypeptide: Cytosolic Fe-S cluster assembly factor CFD1 (283 aa).

Residue 26-33 participates in ATP binding; sequence GKGGVGKS. Residues C202 and C205 each coordinate [4Fe-4S] cluster.

Belongs to the Mrp/NBP35 ATP-binding proteins family. NUBP2/CFD1 subfamily. In terms of assembly, heterotetramer of 2 NBP35 and 2 CFD1 chains. [4Fe-4S] cluster is required as a cofactor.

It localises to the cytoplasm. Its function is as follows. Component of the cytosolic iron-sulfur (Fe/S) protein assembly (CIA) machinery. Required for maturation of extramitochondrial Fe-S proteins. The NBP35-CFD1 heterotetramer forms a Fe-S scaffold complex, mediating the de novo assembly of an Fe-S cluster and its transfer to target apoproteins. Required for biogenesis and export of both ribosomal subunits, which may reflect a role in assembly of the Fe/S clusters in RLI1, a protein which performs rRNA processing and ribosome export. In Kluyveromyces lactis (strain ATCC 8585 / CBS 2359 / DSM 70799 / NBRC 1267 / NRRL Y-1140 / WM37) (Yeast), this protein is Cytosolic Fe-S cluster assembly factor CFD1.